Consider the following 741-residue polypeptide: Transcription activator of gluconeogenesis BDBG_05438 (741 aa).

Residues 1–70 (MTASTRNGSP…NAKDPLRPRR (70 aa)) are disordered. The span at 25–61 (KSMTTTPANPPETKSQTNGKGSGTAQSSQKPASTSAN) shows a compositional bias: polar residues. Residues 77–105 (CFACQRAHLTCGDERPCQRCIKRGLQDAC) constitute a DNA-binding region (zn(2)-C6 fungal-type). Disordered regions lie at residues 135-163 (QANT…QSVS), 202-239 (SVFH…SVSG), 285-321 (GAGD…NNQS), 401-421 (TNLM…PGLK), 559-590 (GSSL…PHTG), and 655-741 (FHGK…AKRG). Residues 202-226 (SVFHAQSPSSTQNFDLSSNPQTQNL) are compositionally biased toward polar residues. Residues 227–238 (SSAMSQTASSVS) are compositionally biased toward low complexity. Composition is skewed to polar residues over residues 291 to 321 (PSDS…NNQS) and 401 to 416 (TNLM…SRIS). The segment covering 560 to 572 (SSLSSASSVRGSS) has biased composition (low complexity). Positions 573–586 (TFTPRNNNTHNSID) are enriched in polar residues. The span at 672-718 (TGTTTSGDVATTTATGTSTSNGANANTNGNNTNPNDPSTAASSSASS) shows a compositional bias: low complexity. Residues 723-732 (RSNHLGKRGG) show a composition bias toward basic residues.

Belongs to the ERT1/acuK family.

Its subcellular location is the nucleus. Its function is as follows. Transcription factor which regulates nonfermentable carbon utilization. Activator of gluconeogenetic genes. In Blastomyces gilchristii (strain SLH14081) (Blastomyces dermatitidis), this protein is Transcription activator of gluconeogenesis BDBG_05438.